The sequence spans 387 residues: 1-deoxy-D-xylulose 5-phosphate reductoisomerase (387 aa).

Residues threonine 10, glycine 11, serine 12, isoleucine 13, and asparagine 124 each contribute to the NADPH site. Residue lysine 125 coordinates 1-deoxy-D-xylulose 5-phosphate. Glutamate 126 serves as a coordination point for NADPH. Mn(2+) is bound at residue aspartate 150. 4 residues coordinate 1-deoxy-D-xylulose 5-phosphate: serine 151, glutamate 152, serine 176, and histidine 199. Glutamate 152 contacts Mn(2+). An NADPH-binding site is contributed by glycine 205. 1-deoxy-D-xylulose 5-phosphate is bound by residues serine 212, asparagine 217, lysine 218, and glutamate 221. Glutamate 221 is a Mn(2+) binding site.

The protein belongs to the DXR family. Requires Mg(2+) as cofactor. Mn(2+) serves as cofactor.

The enzyme catalyses 2-C-methyl-D-erythritol 4-phosphate + NADP(+) = 1-deoxy-D-xylulose 5-phosphate + NADPH + H(+). The protein operates within isoprenoid biosynthesis; isopentenyl diphosphate biosynthesis via DXP pathway; isopentenyl diphosphate from 1-deoxy-D-xylulose 5-phosphate: step 1/6. Functionally, catalyzes the NADPH-dependent rearrangement and reduction of 1-deoxy-D-xylulose-5-phosphate (DXP) to 2-C-methyl-D-erythritol 4-phosphate (MEP). The chain is 1-deoxy-D-xylulose 5-phosphate reductoisomerase from Clostridium beijerinckii (strain ATCC 51743 / NCIMB 8052) (Clostridium acetobutylicum).